The sequence spans 440 residues: 23S rRNA (uracil(1939)-C(5))-methyltransferase RlmD (440 aa).

Residues 6-64 form the TRAM domain; sequence PIHNAQPEQVFIESLDTEGRGIARVEGKVLFVDGALPGERVWARRTQNHKSFDRAELLQ. [4Fe-4S] cluster is bound by residues C77, C83, C86, and C164. Residues Q273, F302, N307, E323, D351, and D372 each contribute to the S-adenosyl-L-methionine site. The active-site Nucleophile is the C397.

Belongs to the class I-like SAM-binding methyltransferase superfamily. RNA M5U methyltransferase family. RlmD subfamily.

The enzyme catalyses uridine(1939) in 23S rRNA + S-adenosyl-L-methionine = 5-methyluridine(1939) in 23S rRNA + S-adenosyl-L-homocysteine + H(+). Catalyzes the formation of 5-methyl-uridine at position 1939 (m5U1939) in 23S rRNA. This chain is 23S rRNA (uracil(1939)-C(5))-methyltransferase RlmD, found in Acidithiobacillus ferrooxidans (strain ATCC 23270 / DSM 14882 / CIP 104768 / NCIMB 8455) (Ferrobacillus ferrooxidans (strain ATCC 23270)).